The chain runs to 163 residues: NADH-quinone oxidoreductase subunit I 1 (163 aa).

4Fe-4S ferredoxin-type domains lie at 53–83 and 94–123; these read LRRY…IEAG and VRYD…EGPN. [4Fe-4S] cluster is bound by residues cysteine 63, cysteine 66, cysteine 69, cysteine 73, cysteine 103, cysteine 106, cysteine 109, and cysteine 113.

It belongs to the complex I 23 kDa subunit family. NDH-1 is composed of 14 different subunits. Subunits NuoA, H, J, K, L, M, N constitute the membrane sector of the complex. Requires [4Fe-4S] cluster as cofactor.

The protein resides in the cell inner membrane. It carries out the reaction a quinone + NADH + 5 H(+)(in) = a quinol + NAD(+) + 4 H(+)(out). In terms of biological role, NDH-1 shuttles electrons from NADH, via FMN and iron-sulfur (Fe-S) centers, to quinones in the respiratory chain. The immediate electron acceptor for the enzyme in this species is believed to be ubiquinone. Couples the redox reaction to proton translocation (for every two electrons transferred, four hydrogen ions are translocated across the cytoplasmic membrane), and thus conserves the redox energy in a proton gradient. The chain is NADH-quinone oxidoreductase subunit I 1 from Rhizobium etli (strain ATCC 51251 / DSM 11541 / JCM 21823 / NBRC 15573 / CFN 42).